The chain runs to 191 residues: Auxin-responsive protein IAA32 (191 aa).

The short motif at 32 to 36 is the EAR-like (transcriptional repression) element; that stretch reads LGLSL. Positions 98–184 constitute a PB1 domain; sequence YAYVKVNLDG…SVDRMRIARR (87 aa).

Belongs to the Aux/IAA family. As to quaternary structure, homodimers and heterodimers.

It localises to the nucleus. Aux/IAA proteins are short-lived transcriptional factors that function as repressors of early auxin response genes at low auxin concentrations. Repression is thought to result from the interaction with auxin response factors (ARFs), proteins that bind to the auxin-responsive promoter element (AuxRE). Formation of heterodimers with ARF proteins may alter their ability to modulate early auxin response genes expression. The polypeptide is Auxin-responsive protein IAA32 (Arabidopsis thaliana (Mouse-ear cress)).